Here is a 290-residue protein sequence, read N- to C-terminus: Outer dense fiber protein 4 (290 aa).

A Phosphoserine modification is found at Ser-28. The next 4 membrane-spanning stretches (helical) occupy residues 44 to 64 (AQVV…VMVF), 125 to 145 (PVFG…FVLT), 164 to 184 (LIGI…LLLF), and 201 to 221 (IGWS…CGIL). The tract at residues 247–290 (GPESLVSPSQTPSSQENSQESPKDDQKPSSPDKVVSPPQPDTTG) is disordered. Residues 252 to 266 (VSPSQTPSSQENSQE) are compositionally biased toward polar residues.

In terms of tissue distribution, expressed in testis.

It is found in the membrane. Its function is as follows. Component of the outer dense fibers (ODF) of spermatozoa which could be involved in sperm tail structure, sperm movement and general organization of cellular cytoskeleton. This chain is Outer dense fiber protein 4 (Odf4), found in Mus musculus (Mouse).